A 284-amino-acid chain; its full sequence is Bifunctional protein FolD (284 aa).

Residues 166–168 (GAS) and I232 contribute to the NADP(+) site.

It belongs to the tetrahydrofolate dehydrogenase/cyclohydrolase family. Homodimer.

The catalysed reaction is (6R)-5,10-methylene-5,6,7,8-tetrahydrofolate + NADP(+) = (6R)-5,10-methenyltetrahydrofolate + NADPH. It catalyses the reaction (6R)-5,10-methenyltetrahydrofolate + H2O = (6R)-10-formyltetrahydrofolate + H(+). It functions in the pathway one-carbon metabolism; tetrahydrofolate interconversion. Functionally, catalyzes the oxidation of 5,10-methylenetetrahydrofolate to 5,10-methenyltetrahydrofolate and then the hydrolysis of 5,10-methenyltetrahydrofolate to 10-formyltetrahydrofolate. The polypeptide is Bifunctional protein FolD (Shewanella baltica (strain OS223)).